The sequence spans 305 residues: Oxygen-dependent coproporphyrinogen-III oxidase (305 aa).

Ser98 contributes to the substrate binding site. Residues His102 and His112 each contribute to the a divalent metal cation site. His112 (proton donor) is an active-site residue. Asn114–Arg116 is a substrate binding site. A divalent metal cation-binding residues include His151 and His181. The important for dimerization stretch occupies residues Tyr246–Glu281. Gly264–Arg266 provides a ligand contact to substrate.

It belongs to the aerobic coproporphyrinogen-III oxidase family. Homodimer. A divalent metal cation serves as cofactor.

It is found in the cytoplasm. It carries out the reaction coproporphyrinogen III + O2 + 2 H(+) = protoporphyrinogen IX + 2 CO2 + 2 H2O. Its pathway is porphyrin-containing compound metabolism; protoporphyrin-IX biosynthesis; protoporphyrinogen-IX from coproporphyrinogen-III (O2 route): step 1/1. Functionally, involved in the heme biosynthesis. Catalyzes the aerobic oxidative decarboxylation of propionate groups of rings A and B of coproporphyrinogen-III to yield the vinyl groups in protoporphyrinogen-IX. The polypeptide is Oxygen-dependent coproporphyrinogen-III oxidase (Vibrio campbellii (strain ATCC BAA-1116)).